Consider the following 186-residue polypeptide: Superoxide dismutase [Cu-Zn] (186 aa).

The signal sequence occupies residues 1-22 (MNMKTLLALAVSAVCSVSVAQA). Cu cation is bound by residues His79, His81, and His104. The cysteines at positions 86 and 182 are disulfide-linked. The Zn(2+) site is built by His104, His113, His122, and Asp125. Residue His160 participates in Cu cation binding.

It belongs to the Cu-Zn superoxide dismutase family. As to quaternary structure, homodimer. Cu cation is required as a cofactor. It depends on Zn(2+) as a cofactor.

The protein localises to the periplasm. It carries out the reaction 2 superoxide + 2 H(+) = H2O2 + O2. Functionally, destroys radicals which are normally produced within the cells and which are toxic to biological systems. This is Superoxide dismutase [Cu-Zn] (sodC) from Neisseria meningitidis serogroup A / serotype 4A (strain DSM 15465 / Z2491).